The following is a 329-amino-acid chain: Ribosomal RNA small subunit methyltransferase H (329 aa).

Residues 34–36, D52, F79, D100, and Q107 contribute to the S-adenosyl-L-methionine site; that span reads GGY. The interval 285–329 is disordered; it reads GEDEVAHNPRARSAKLRAAERTSAPAHKDDQSSSWPRLSDVMRGG.

The protein belongs to the methyltransferase superfamily. RsmH family.

Its subcellular location is the cytoplasm. The catalysed reaction is cytidine(1402) in 16S rRNA + S-adenosyl-L-methionine = N(4)-methylcytidine(1402) in 16S rRNA + S-adenosyl-L-homocysteine + H(+). Specifically methylates the N4 position of cytidine in position 1402 (C1402) of 16S rRNA. This is Ribosomal RNA small subunit methyltransferase H from Bradyrhizobium diazoefficiens (strain JCM 10833 / BCRC 13528 / IAM 13628 / NBRC 14792 / USDA 110).